The chain runs to 405 residues: Tryptophan synthase beta chain (405 aa).

Lys-98 carries the N6-(pyridoxal phosphate)lysine modification.

It belongs to the TrpB family. Tetramer of two alpha and two beta chains. The cofactor is pyridoxal 5'-phosphate.

The catalysed reaction is (1S,2R)-1-C-(indol-3-yl)glycerol 3-phosphate + L-serine = D-glyceraldehyde 3-phosphate + L-tryptophan + H2O. The protein operates within amino-acid biosynthesis; L-tryptophan biosynthesis; L-tryptophan from chorismate: step 5/5. Its function is as follows. The beta subunit is responsible for the synthesis of L-tryptophan from indole and L-serine. The chain is Tryptophan synthase beta chain from Stenotrophomonas maltophilia (strain R551-3).